Reading from the N-terminus, the 164-residue chain is MKKQVVEVLVEGGKATPGPPLGPAIGPLGLNVKQVVDKINEATKEFAGMQVPVKIIVDPVTKQFEIEVGVPPTSQLIKKELGLEKGSGEPKHNIVGNLTMEQVIKIAKMKRNQMLALTLKAAAKEVIGTALSMGVTVEGKDPREVQREIDEGVYDELFEKAEKE.

The protein belongs to the universal ribosomal protein uL11 family. In terms of assembly, part of the ribosomal stalk of the 50S ribosomal subunit. Interacts with L10 and the large rRNA to form the base of the stalk. L10 forms an elongated spine to which L12 dimers bind in a sequential fashion forming a multimeric L10(L12)X complex.

Functionally, forms part of the ribosomal stalk which helps the ribosome interact with GTP-bound translation factors. The polypeptide is Large ribosomal subunit protein uL11 (Pyrococcus abyssi (strain GE5 / Orsay)).